The primary structure comprises 256 residues: MLWVVLAVVVVLASVLVLLRQSSGLLALLWHDVVHQRLLNFFTGLSRPQRILKAVQKNATKGNPESVIAAIDHYCRHSEWAMNVGDEKGLILDSVVTEVNPSTALELGTYCGYSTVRIARLLSPGTKLITLEFNPDYAAIARQIIAYAGLQDKVILVEGPSGDLIPKMKQQHGIKSFDFVFLDHWKDRYVPDTKLLEECGLLRKGSVLLADNVICPGTPEYLKYVRNDPRYESRYFKSNLEYTKVEDGLEKSVFLG.

An N-terminal signal peptide occupies residues 1–27 (MLWVVLAVVVVLASVLVLLRQSSGLLA). Asparagine 58 carries an N-linked (GlcNAc...) asparagine glycan. The S-adenosyl-L-methionine site is built by valine 84, serine 114, glutamate 132, and aspartate 183. Aspartate 183 provides a ligand contact to Mg(2+). Substrate is bound at residue lysine 186. Residues aspartate 211 and asparagine 212 each contribute to the Mg(2+) site. Substrate contacts are provided by asparagine 212 and glutamate 241.

It belongs to the class I-like SAM-binding methyltransferase superfamily. Cation-dependent O-methyltransferase family. Requires Mg(2+) as cofactor. Widely expressed. Has higher expression in females compared to males. Strongly expressed in liver and diencephalon. Expressed at lower levels in hindbrain, spinal cord, eye, telencephalon, spleen, gut, gill and muscle. Detected in ovary and testis. In eye, detected in all layers of the retina with highest expression in the inner nuclear layer. In gut, expressed in the lamina propria but has little or no expression in gut epithelium. In brain, has strongest expression near the midline of the telencephalon, in the periventricular gray zone of the optic tectum, in the preglomerular nucleus, and near the walls of the diencephalic ventricle.

Its subcellular location is the secreted. It carries out the reaction a catechol + S-adenosyl-L-methionine = a guaiacol + S-adenosyl-L-homocysteine + H(+). Functionally, catalyzes the O-methylation, and thereby the inactivation, of catecholamine neurotransmitters and catechol hormones. Shows highest activity towards catecholestrogens and dobutamine. Also has lower activity towards L-DOPA, dopamine and epinephrine. Active towards the xenobiotic compounds methyl-DOPA, carbidopa, isoproterenol, and apomorphine. The sequence is that of Catechol O-methyltransferase A from Danio rerio (Zebrafish).